A 252-amino-acid polypeptide reads, in one-letter code: Adenosylcobinamide-GDP ribazoletransferase (252 aa).

The next 7 helical transmembrane spans lie at 34 to 54, 55 to 75, 113 to 133, 138 to 158, 174 to 194, 198 to 218, and 230 to 250; these read GASF…IIYK, LCII…AGIV, YACL…CSIV, LIII…AFIG, IGKW…FFLM, FIYV…FNVF, and LLGA…CVII.

This sequence belongs to the CobS family. Mg(2+) is required as a cofactor.

The protein localises to the cell membrane. It carries out the reaction alpha-ribazole + adenosylcob(III)inamide-GDP = adenosylcob(III)alamin + GMP + H(+). The catalysed reaction is alpha-ribazole 5'-phosphate + adenosylcob(III)inamide-GDP = adenosylcob(III)alamin 5'-phosphate + GMP + H(+). It participates in cofactor biosynthesis; adenosylcobalamin biosynthesis; adenosylcobalamin from cob(II)yrinate a,c-diamide: step 7/7. Joins adenosylcobinamide-GDP and alpha-ribazole to generate adenosylcobalamin (Ado-cobalamin). Also synthesizes adenosylcobalamin 5'-phosphate from adenosylcobinamide-GDP and alpha-ribazole 5'-phosphate. This is Adenosylcobinamide-GDP ribazoletransferase from Clostridium kluyveri (strain NBRC 12016).